A 217-amino-acid chain; its full sequence is Casparian strip membrane protein 6 (217 aa).

Over 1 to 57 (MEEAKHIEAVEAKQIEAEEAQRIKAGEAKQIEAGETSRSSRKVITFEPKLVINKGIS) the chain is Cytoplasmic. The helical transmembrane segment at 58 to 78 (VLGFVLRLFAVFGTIGSALAM) threads the bilayer. Residues 79–103 (GTTHESVVSLSQLVLLKVKYSDLPT) lie on the Extracellular side of the membrane. The chain crosses the membrane as a helical span at residues 104-124 (LMFFVVANAIAGGYLVLSLPV). At 125 to 138 (SIFHIFSTKAKTSR) the chain is on the cytoplasmic side. Residues 139–159 (IILLVIDTVMLALVSSGASAA) traverse the membrane as a helical segment. At 160 to 191 (TATVYLAHEGNTTANWPPICQQFDGFCERISG) the chain is on the extracellular side. The N-linked (GlcNAc...) asparagine glycan is linked to Asn-170. A helical transmembrane segment spans residues 192–212 (SLIGSFCAVILLMLIVINSAI). At 213-217 (SLSRH) the chain is on the cytoplasmic side.

Belongs to the Casparian strip membrane proteins (CASP) family. In terms of assembly, homodimer and heterodimers.

The protein localises to the cell membrane. Functionally, regulates membrane-cell wall junctions and localized cell wall deposition. Required for establishment of the Casparian strip membrane domain (CSD) and the subsequent formation of Casparian strips, a cell wall modification of the root endodermis that determines an apoplastic barrier between the intraorganismal apoplasm and the extraorganismal apoplasm and prevents lateral diffusion. This Arabidopsis lyrata subsp. lyrata (Lyre-leaved rock-cress) protein is Casparian strip membrane protein 6.